We begin with the raw amino-acid sequence, 243 residues long: MEISQQAGWCKKPASPMNTRAALEAVRNTAWTIVLLTSAAVMGASGISRVSANLGHSTVMTCPNRTNISMVTWKINPKTGHQCTLAYLIDKDSTGKNSCSDRINWRSRPDWDQALEIQQVGKADEGNYTCEVVNADGNFHYLYHLTVLVAPRMALYCDDHGNPVCEAETVKPAAEISWVPESNSTPRADSHGNGTVTVVSRFAARSTNGKNPTCIVSHATLNETRSINCSSRTLAQLPGGSAP.

Over 1–29 the chain is Cytoplasmic; sequence MEISQQAGWCKKPASPMNTRAALEAVRNT. A helical; Signal-anchor for type II membrane protein membrane pass occupies residues 30 to 47; the sequence is AWTIVLLTSAAVMGASGI. The region spanning 47–146 is the Ig-like V-type domain; that stretch reads ISRVSANLGH…GNFHYLYHLT (100 aa). Residues 48-243 lie on the Lumenal side of the membrane; that stretch reads SRVSANLGHS…LAQLPGGSAP (196 aa). 2 cysteine pairs are disulfide-bonded: Cys-62–Cys-130 and Cys-165–Cys-214. Asn-64, Asn-67, Asn-127, Asn-193, Asn-222, and Asn-228 each carry an N-linked (GlcNAc...) asparagine glycan. Residues 144 to 228 enclose the Ig-like C2-type domain; that stretch reads HLTVLVAPRM…ATLNETRSIN (85 aa).

The protein belongs to the CD200R family. In terms of tissue distribution, expressed in peripheral blood lymphocytes (PBL) and peripheral blood mononuclear cells (PBMC).

The protein localises to the membrane. The protein is Cell surface glycoprotein CD200 receptor 1-B (CD200R1B) of Gallus gallus (Chicken).